The sequence spans 429 residues: Ribosomal RNA small subunit methyltransferase B (429 aa).

S-adenosyl-L-methionine is bound by residues 254-260 (CAAPGGK), Asp-277, Asp-303, and Asp-322. The active-site Nucleophile is the Cys-375.

This sequence belongs to the class I-like SAM-binding methyltransferase superfamily. RsmB/NOP family.

It is found in the cytoplasm. It carries out the reaction cytidine(967) in 16S rRNA + S-adenosyl-L-methionine = 5-methylcytidine(967) in 16S rRNA + S-adenosyl-L-homocysteine + H(+). Specifically methylates the cytosine at position 967 (m5C967) of 16S rRNA. In Yersinia enterocolitica serotype O:8 / biotype 1B (strain NCTC 13174 / 8081), this protein is Ribosomal RNA small subunit methyltransferase B.